We begin with the raw amino-acid sequence, 280 residues long: Urease accessory protein UreD (280 aa).

It belongs to the UreD family. As to quaternary structure, ureD, UreF and UreG form a complex that acts as a GTP-hydrolysis-dependent molecular chaperone, activating the urease apoprotein by helping to assemble the nickel containing metallocenter of UreC. The UreE protein probably delivers the nickel.

The protein localises to the cytoplasm. Functionally, required for maturation of urease via the functional incorporation of the urease nickel metallocenter. The chain is Urease accessory protein UreD from Staphylococcus saprophyticus subsp. saprophyticus (strain ATCC 15305 / DSM 20229 / NCIMB 8711 / NCTC 7292 / S-41).